The following is a 140-amino-acid chain: Large ribosomal subunit protein uL15 (140 aa).

The interval 1–32 (MDTKKFRGSRTCGGGTHKNRRGAGNRGGRGKA) is disordered.

It belongs to the universal ribosomal protein uL15 family. Part of the 50S ribosomal subunit.

Its function is as follows. Binds to the 23S rRNA. This Methanosarcina acetivorans (strain ATCC 35395 / DSM 2834 / JCM 12185 / C2A) protein is Large ribosomal subunit protein uL15.